We begin with the raw amino-acid sequence, 360 residues long: MKASLLNKLDILQDRFEELTALLGDAEVISDQSRFRAYSREYAEVEPVIVAYRQLCKVQQDLEGAQALLKDSDPDMREMAEEEVAEAKAQLETLEANLQRMLLPKDPNDGRNVFLEIRAGTGGDEAAIFAGDLFRMYSRYAEKQGWRVEILSESEGEHGGYKEVISRVEGDNVYAKLKFESGAHRVQRVPETESQGRIHTSACTVAVLPEPDEQAAVEINPAELRIDTYRSSGAGGQHVNKTDSAIRITHLPTGIVVECQEERSQHKNRAKAMAWLAAKLQDRQDAAAHKEISETRKLLVGSGDRSERIRTYNFPQGRVTDHRVNLTLYSLNEVIGGAVEQVIEPLLQEYQADQLAALGD.

At glutamine 237 the chain carries N5-methylglutamine.

It belongs to the prokaryotic/mitochondrial release factor family. Post-translationally, methylated by PrmC. Methylation increases the termination efficiency of RF1.

The protein resides in the cytoplasm. In terms of biological role, peptide chain release factor 1 directs the termination of translation in response to the peptide chain termination codons UAG and UAA. The sequence is that of Peptide chain release factor 1 from Stutzerimonas stutzeri (strain A1501) (Pseudomonas stutzeri).